The primary structure comprises 134 residues: uncharacterized protein (134 aa).

Residues 10–70 (KETRQRIIDA…AVLASRQHPL (61 aa)) form the HTH tetR-type domain. The segment at residues 33–52 (TLDQIARKAGVTRGAVYWHF) is a DNA-binding region (H-T-H motif).

Functionally, unknown, does not seem to be involved in regulation of the ttgGHI or ttgVW operons. This is an uncharacterized protein from Pseudomonas putida (strain DOT-T1E).